Consider the following 144-residue polypeptide: Putative pre-16S rRNA nuclease (144 aa).

The protein belongs to the YqgF nuclease family.

It localises to the cytoplasm. In terms of biological role, could be a nuclease involved in processing of the 5'-end of pre-16S rRNA. The sequence is that of Putative pre-16S rRNA nuclease from Symbiobacterium thermophilum (strain DSM 24528 / JCM 14929 / IAM 14863 / T).